Reading from the N-terminus, the 381-residue chain is Spermidine/putrescine import ATP-binding protein PotA (381 aa).

The 231-residue stretch at 22 to 252 (VELRNVFKFF…PKTSFVADFI (231 aa)) folds into the ABC transporter domain. 54-61 (GPSGCGKT) contributes to the ATP binding site.

It belongs to the ABC transporter superfamily. Spermidine/putrescine importer (TC 3.A.1.11.1) family. As to quaternary structure, the complex is composed of two ATP-binding proteins (PotA), two transmembrane proteins (PotB and PotC) and a solute-binding protein (PotD).

The protein resides in the cell inner membrane. The enzyme catalyses ATP + H2O + polyamine-[polyamine-binding protein]Side 1 = ADP + phosphate + polyamineSide 2 + [polyamine-binding protein]Side 1.. Part of the ABC transporter complex PotABCD involved in spermidine/putrescine import. Responsible for energy coupling to the transport system. This chain is Spermidine/putrescine import ATP-binding protein PotA, found in Nostoc sp. (strain PCC 7120 / SAG 25.82 / UTEX 2576).